We begin with the raw amino-acid sequence, 361 residues long: Phenylalanine--tRNA ligase alpha subunit (361 aa).

Glu260 provides a ligand contact to Mg(2+).

The protein belongs to the class-II aminoacyl-tRNA synthetase family. Phe-tRNA synthetase alpha subunit type 1 subfamily. In terms of assembly, tetramer of two alpha and two beta subunits. The cofactor is Mg(2+).

The protein resides in the cytoplasm. The catalysed reaction is tRNA(Phe) + L-phenylalanine + ATP = L-phenylalanyl-tRNA(Phe) + AMP + diphosphate + H(+). The protein is Phenylalanine--tRNA ligase alpha subunit of Chelativorans sp. (strain BNC1).